The sequence spans 83 residues: CLAVATA3/ESR (CLE)-related protein 20 (83 aa).

The N-terminal stretch at 1–29 (MKNKNMNPSRPRLLCLIVFLFLVIVLSKA) is a signal peptide.

This sequence belongs to the CLV3/ESR signal peptide family. In terms of tissue distribution, mostly expressed in roots, seedlings, leaves, flowers, stems and apex, and, to a lower extent, in siliques and pollen.

It is found in the secreted. The protein localises to the extracellular space. In terms of biological role, extracellular signal peptide that regulates cell fate. Represses root apical meristem maintenance. Inhibits irreversibly root growth by reducing cell division rates in the root apical meristem. Regulates the transition of protophloem cells from proliferation to differentiation, thus impinging on postembryonic growth capacity of the root meristem; this signaling pathway requires CRN and CLV2. This chain is CLAVATA3/ESR (CLE)-related protein 20, found in Arabidopsis thaliana (Mouse-ear cress).